Reading from the N-terminus, the 557-residue chain is Membrane protein insertase YidC (557 aa).

5 helical membrane passes run 6 to 26, 219 to 239, 367 to 387, 437 to 457, and 514 to 534; these read TILW…WQVH, IGPF…IYTD, IVGN…LAFF, LGGC…YWVL, and MPIV…LYWV.

The protein belongs to the OXA1/ALB3/YidC family. Type 1 subfamily. In terms of assembly, interacts with the Sec translocase complex via SecD. Specifically interacts with transmembrane segments of nascent integral membrane proteins during membrane integration.

The protein resides in the cell inner membrane. In terms of biological role, required for the insertion and/or proper folding and/or complex formation of integral membrane proteins into the membrane. Involved in integration of membrane proteins that insert both dependently and independently of the Sec translocase complex, as well as at least some lipoproteins. Aids folding of multispanning membrane proteins. The polypeptide is Membrane protein insertase YidC (Polynucleobacter asymbioticus (strain DSM 18221 / CIP 109841 / QLW-P1DMWA-1) (Polynucleobacter necessarius subsp. asymbioticus)).